Reading from the N-terminus, the 316-residue chain is 4-hydroxy-3-methylbut-2-enyl diphosphate reductase (316 aa).

Cys-12 is a binding site for [4Fe-4S] cluster. Residues His-41 and His-74 each contribute to the (2E)-4-hydroxy-3-methylbut-2-enyl diphosphate site. His-41 and His-74 together coordinate dimethylallyl diphosphate. Residues His-41 and His-74 each contribute to the isopentenyl diphosphate site. A [4Fe-4S] cluster-binding site is contributed by Cys-96. A (2E)-4-hydroxy-3-methylbut-2-enyl diphosphate-binding site is contributed by His-124. His-124 contributes to the dimethylallyl diphosphate binding site. His-124 provides a ligand contact to isopentenyl diphosphate. The active-site Proton donor is Glu-126. Thr-167 provides a ligand contact to (2E)-4-hydroxy-3-methylbut-2-enyl diphosphate. Residue Cys-197 participates in [4Fe-4S] cluster binding. Positions 225, 226, 227, and 269 each coordinate (2E)-4-hydroxy-3-methylbut-2-enyl diphosphate. Dimethylallyl diphosphate contacts are provided by Ser-225, Ser-226, Asn-227, and Ser-269. Isopentenyl diphosphate-binding residues include Ser-225, Ser-226, Asn-227, and Ser-269.

This sequence belongs to the IspH family. In terms of assembly, homodimer. [4Fe-4S] cluster serves as cofactor.

The catalysed reaction is isopentenyl diphosphate + 2 oxidized [2Fe-2S]-[ferredoxin] + H2O = (2E)-4-hydroxy-3-methylbut-2-enyl diphosphate + 2 reduced [2Fe-2S]-[ferredoxin] + 2 H(+). The enzyme catalyses dimethylallyl diphosphate + 2 oxidized [2Fe-2S]-[ferredoxin] + H2O = (2E)-4-hydroxy-3-methylbut-2-enyl diphosphate + 2 reduced [2Fe-2S]-[ferredoxin] + 2 H(+). The protein operates within isoprenoid biosynthesis; dimethylallyl diphosphate biosynthesis; dimethylallyl diphosphate from (2E)-4-hydroxy-3-methylbutenyl diphosphate: step 1/1. It participates in isoprenoid biosynthesis; isopentenyl diphosphate biosynthesis via DXP pathway; isopentenyl diphosphate from 1-deoxy-D-xylulose 5-phosphate: step 6/6. Functionally, catalyzes the conversion of 1-hydroxy-2-methyl-2-(E)-butenyl 4-diphosphate (HMBPP) into a mixture of isopentenyl diphosphate (IPP) and dimethylallyl diphosphate (DMAPP). Acts in the terminal step of the DOXP/MEP pathway for isoprenoid precursor biosynthesis. The sequence is that of 4-hydroxy-3-methylbut-2-enyl diphosphate reductase from Salmonella paratyphi C (strain RKS4594).